We begin with the raw amino-acid sequence, 75 residues long: uncharacterized protein (75 aa).

One can recognise a LysM domain in the interval 29-72; sequence EVYHVESGDTLWTIAKSFEIPVQQLMNLNKLSSDRIYPGQIIKI.

This is an uncharacterized protein from Bacillus subtilis (strain 168).